The chain runs to 251 residues: 5'-nucleotidase SurE (251 aa).

The a divalent metal cation site is built by Asp-9, Asp-10, Ser-40, and Asn-94.

This sequence belongs to the SurE nucleotidase family. A divalent metal cation is required as a cofactor.

It is found in the cytoplasm. It catalyses the reaction a ribonucleoside 5'-phosphate + H2O = a ribonucleoside + phosphate. Functionally, nucleotidase that shows phosphatase activity on nucleoside 5'-monophosphates. The sequence is that of 5'-nucleotidase SurE from Aquifex aeolicus (strain VF5).